Consider the following 215-residue polypeptide: Reticulon-like protein B14 (215 aa).

The region spanning 31 to 211 (FADIMFWKNK…NKIPKAQAKT (181 aa)) is the Reticulon domain. Transmembrane regions (helical) follow at residues 41–61 (KESGTILGVFTLIWFLFEVVE), 62–82 (YPFITFLCQILLLFIFIFLIW), and 141–161 (LWILSVVGNYFSSLTLLYIVF).

It is found in the endoplasmic reticulum membrane. This Arabidopsis thaliana (Mouse-ear cress) protein is Reticulon-like protein B14 (RTNLB14).